The sequence spans 398 residues: 1-deoxy-D-xylulose 5-phosphate reductoisomerase (398 aa).

NADPH-binding residues include Thr10, Gly11, Ser12, Ile13, Asn38, and Asn124. Residue Lys125 participates in 1-deoxy-D-xylulose 5-phosphate binding. Glu126 is an NADPH binding site. Asp150 provides a ligand contact to Mn(2+). 1-deoxy-D-xylulose 5-phosphate is bound by residues Ser151, Glu152, Ser176, and His199. Position 152 (Glu152) interacts with Mn(2+). Gly205 serves as a coordination point for NADPH. Residues Ser212, Asn217, Lys218, and Glu221 each coordinate 1-deoxy-D-xylulose 5-phosphate. Position 221 (Glu221) interacts with Mn(2+).

The protein belongs to the DXR family. The cofactor is Mg(2+). Mn(2+) is required as a cofactor.

It carries out the reaction 2-C-methyl-D-erythritol 4-phosphate + NADP(+) = 1-deoxy-D-xylulose 5-phosphate + NADPH + H(+). It participates in isoprenoid biosynthesis; isopentenyl diphosphate biosynthesis via DXP pathway; isopentenyl diphosphate from 1-deoxy-D-xylulose 5-phosphate: step 1/6. Functionally, catalyzes the NADPH-dependent rearrangement and reduction of 1-deoxy-D-xylulose-5-phosphate (DXP) to 2-C-methyl-D-erythritol 4-phosphate (MEP). The protein is 1-deoxy-D-xylulose 5-phosphate reductoisomerase of Crocosphaera subtropica (strain ATCC 51142 / BH68) (Cyanothece sp. (strain ATCC 51142)).